The following is a 284-amino-acid chain: Bifunctional protein FolD (284 aa).

Residues 166–168 (GAS), serine 191, and isoleucine 232 contribute to the NADP(+) site.

Belongs to the tetrahydrofolate dehydrogenase/cyclohydrolase family. Homodimer.

The enzyme catalyses (6R)-5,10-methylene-5,6,7,8-tetrahydrofolate + NADP(+) = (6R)-5,10-methenyltetrahydrofolate + NADPH. It catalyses the reaction (6R)-5,10-methenyltetrahydrofolate + H2O = (6R)-10-formyltetrahydrofolate + H(+). The protein operates within one-carbon metabolism; tetrahydrofolate interconversion. Catalyzes the oxidation of 5,10-methylenetetrahydrofolate to 5,10-methenyltetrahydrofolate and then the hydrolysis of 5,10-methenyltetrahydrofolate to 10-formyltetrahydrofolate. The polypeptide is Bifunctional protein FolD (Neisseria meningitidis serogroup C (strain 053442)).